Reading from the N-terminus, the 669-residue chain is MAVYRAALGASLAAARLLPLGRCSPSPAPRSTLSGAAMEPAPRWLAGLRFDNRALRALPVEAPPPGPEGAPSAPRPVPGACFTRVQPTPLRQPRLVALSEPALALLGLGAPPAREAEAEAALFFSGNALLPGAEPAAHCYCGHQFGQFAGQLGDGAAMYLGEVCTATGERWELQLKGAGPTPFSRQADGRKVLRSSIREFLCSEAMFHLGVPTTRAGACVTSESTVVRDVFYDGNPKYEQCTVVLRVASTFIRFGSFEIFKSADEHTGRAGPSVGRNDIRVQLLDYVISSFYPEIQAAHASDSVQRNAAFFREVTRRTARMVAEWQCVGFCHGVLNTDNMSILGLTIDYGPFGFLDRYDPDHVCNASDNTGRYAYSKQPEVCRWNLRKLAEALQPELPLELGEAILAEEFDAEFQRHYLQKMRRKLGLVQVELEEDGALVSKLLETMHLTGADFTNTFYLLSSFPVELESPGLAEFLARLMEQCASLEELRLAFRPQMDPRQLSMMLMLAQSNPQLFALMGTRAGIARELERVEQQSRLEQLSAAELQSRNQGHWADWLQAYRARLDKDLEGAGDAAAWQAEHVRVMHANNPKYVLRNYIAQNAIEAAERGDFSEVRRVLKLLETPYHCEAGAATDAEATEADGADGRQRSYSSKPPLWAAELCVTUSS.

The transit peptide at 1-115 (MAVYRAALGA…LGLGAPPARE (115 aa)) directs the protein to the mitochondrion. Residues Gly153, Gly155, Lys176, Asp188, Gly189, Arg246, and Arg253 each contribute to the ATP site. Catalysis depends on Asp338, which acts as the Proton acceptor. The Mg(2+) site is built by Asn339 and Asp348. Asp348 is an ATP binding site. Residues 634-654 (ATDAEATEADGADGRQRSYSS) are disordered. At Thr635 the chain carries Phosphothreonine. Ser653 is modified (phosphoserine). Sec667 is a non-standard amino acid (selenocysteine).

It belongs to the SELO family. It depends on Mg(2+) as a cofactor.

It localises to the mitochondrion. It catalyses the reaction L-tyrosyl-[protein] + ATP = O-(5'-adenylyl)-L-tyrosyl-[protein] + diphosphate. The enzyme catalyses L-threonyl-[protein] + ATP = 3-O-(5'-adenylyl)-L-threonyl-[protein] + diphosphate. The catalysed reaction is L-seryl-[protein] + ATP = 3-O-(5'-adenylyl)-L-seryl-[protein] + diphosphate. In terms of biological role, catalyzes the transfer of adenosine 5'-monophosphate (AMP) to Ser, Thr and Tyr residues of target proteins (AMPylation). May be a redox-active mitochondrial selenoprotein which interacts with a redox target protein. The polypeptide is Protein adenylyltransferase SelO, mitochondrial (Homo sapiens (Human)).